A 179-amino-acid chain; its full sequence is Ribosome-recycling factor (179 aa).

This sequence belongs to the RRF family.

It localises to the cytoplasm. Functionally, responsible for the release of ribosomes from messenger RNA at the termination of protein biosynthesis. May increase the efficiency of translation by recycling ribosomes from one round of translation to another. This Chlamydia muridarum (strain MoPn / Nigg) protein is Ribosome-recycling factor.